The sequence spans 97 residues: Kininogen-1 (97 aa).

The first 23 residues, 1–23 (MRLWFCLSFLIILCVEHFPGTLA), serve as a signal peptide directing secretion.

This sequence belongs to the bradykinin-related peptide family. As to expression, expressed by the skin glands.

It localises to the secreted. [Ala3,Thr6]bradykinin: produces in vitro relaxation of rat arterial smooth muscle and constriction of intestinal smooth muscle. Possesses insulin-releasing activity. May target bradykinin receptors (BDKRB). In Bombina variegata (Yellow-bellied toad), this protein is Kininogen-1.